Here is a 522-residue protein sequence, read N- to C-terminus: Monogalactosyldiacylglycerol synthase, chloroplastic (522 aa).

Residues 1 to 98 (MSHPSTVTSE…RIPLGFSSIG (98 aa)) constitute a chloroplast transit peptide.

The protein belongs to the glycosyltransferase 28 family. In terms of assembly, homodimer. Requires Zn(2+) as cofactor.

The protein localises to the plastid. Its subcellular location is the chloroplast inner membrane. It carries out the reaction a 1,2-diacyl-sn-glycerol + UDP-alpha-D-galactose = a 1,2-diacyl-3-O-(beta-D-galactosyl)-sn-glycerol + UDP + H(+). Its activity is regulated as follows. Inhibited by ortho-phenanthroline and UDP (competitive inhibitor relatively to UDP-Gal only) and inactivated by citraconic anhydride, tert-butoxycarbonyl-L-methionine hydrosuccinimidyl ester (SLR) and N-ethylmaleimide (NEM). Functionally, involved in the synthesis of the major structural component of photosynthetic membranes. The 1,2-diacylglycerol substrate preference is 18:2/18:2 &gt; 18:0/18:1 &gt; 18:1/18:1 &gt; 18:1/16:0 &gt; 16:0/18:2 &gt; 18:3/18:3 &gt; 16:0/18:1 &gt; 16:0/16:0 &gt; 18:0/18:0. This chain is Monogalactosyldiacylglycerol synthase, chloroplastic (MGD A), found in Spinacia oleracea (Spinach).